Consider the following 159-residue polypeptide: Transcriptional repressor NrdR (159 aa).

The tract at residues 1–26 (MRCPFCAHDNSQVKDSRPSEDNTSIR) is disordered. A zinc finger lies at 3 to 34 (CPFCAHDNSQVKDSRPSEDNTSIRRRRQCEGC). Residues 11–24 (SQVKDSRPSEDNTS) show a composition bias toward basic and acidic residues. Positions 49-139 (VVVVKSGERR…VYRDFTEARD (91 aa)) constitute an ATP-cone domain.

The protein belongs to the NrdR family. Zn(2+) is required as a cofactor.

Its function is as follows. Negatively regulates transcription of bacterial ribonucleotide reductase nrd genes and operons by binding to NrdR-boxes. This is Transcriptional repressor NrdR from Novosphingobium aromaticivorans (strain ATCC 700278 / DSM 12444 / CCUG 56034 / CIP 105152 / NBRC 16084 / F199).